The sequence spans 503 residues: Probable cytosol aminopeptidase (503 aa).

Mn(2+) is bound by residues Lys268 and Asp273. Lys280 is a catalytic residue. Mn(2+) contacts are provided by Asp291, Asp350, and Glu352. Residue Arg354 is part of the active site.

This sequence belongs to the peptidase M17 family. Requires Mn(2+) as cofactor.

It localises to the cytoplasm. It carries out the reaction Release of an N-terminal amino acid, Xaa-|-Yaa-, in which Xaa is preferably Leu, but may be other amino acids including Pro although not Arg or Lys, and Yaa may be Pro. Amino acid amides and methyl esters are also readily hydrolyzed, but rates on arylamides are exceedingly low.. The catalysed reaction is Release of an N-terminal amino acid, preferentially leucine, but not glutamic or aspartic acids.. Functionally, presumably involved in the processing and regular turnover of intracellular proteins. Catalyzes the removal of unsubstituted N-terminal amino acids from various peptides. The chain is Probable cytosol aminopeptidase from Corynebacterium efficiens (strain DSM 44549 / YS-314 / AJ 12310 / JCM 11189 / NBRC 100395).